Reading from the N-terminus, the 319-residue chain is Acyl-coenzyme A thioesterase 8 (319 aa).

Positions M1–P20 are disordered. Residues D232, S254, and Q304 each act as charge relay system in the active site. A Microbody targeting signal motif is present at residues S317–L319.

The protein belongs to the C/M/P thioester hydrolase family. Homodimer. In terms of assembly, (Microbial infection) Interacts with human immunodeficiency virus (HIV-1) Nef (via middle region); this interaction enhances ACOT8 Acyl-CoA thioesterase activity and occurs in a Nef myristoylation-independent manner. According to a second report, the interaction with HIV-1 Nef occurs in a Nef myristoylation-independent manner but does not enhance ACOT8 Acyl-CoA thioesterase activity. In terms of tissue distribution, detected in a T-cell line (at protein level). Ubiquitous.

The protein localises to the peroxisome matrix. It carries out the reaction choloyl-CoA + H2O = cholate + CoA + H(+). The enzyme catalyses chenodeoxycholoyl-CoA + H2O = chenodeoxycholate + CoA + H(+). The catalysed reaction is acetyl-CoA + H2O = acetate + CoA + H(+). It catalyses the reaction butanoyl-CoA + H2O = butanoate + CoA + H(+). It carries out the reaction 2-methylpropanoyl-CoA + H2O = 2-methylpropanoate + CoA + H(+). The enzyme catalyses hexanoyl-CoA + H2O = hexanoate + CoA + H(+). The catalysed reaction is octanoyl-CoA + H2O = octanoate + CoA + H(+). It catalyses the reaction decanoyl-CoA + H2O = decanoate + CoA + H(+). It carries out the reaction dodecanoyl-CoA + H2O = dodecanoate + CoA + H(+). The enzyme catalyses tetradecanoyl-CoA + H2O = tetradecanoate + CoA + H(+). The catalysed reaction is hexadecanoyl-CoA + H2O = hexadecanoate + CoA + H(+). It catalyses the reaction octadecanoyl-CoA + H2O = octadecanoate + CoA + H(+). It carries out the reaction malonyl-CoA + H2O = malonate + CoA + H(+). The enzyme catalyses acetoacetyl-CoA + H2O = acetoacetate + CoA + H(+). The catalysed reaction is propanoyl-CoA + H2O = propanoate + CoA + H(+). It catalyses the reaction succinyl-CoA + H2O = succinate + CoA + H(+). It carries out the reaction glutaryl-CoA + H2O = glutarate + CoA + H(+). The enzyme catalyses hexanedioyl-CoA + H2O = hexanedioate + CoA + H(+). The catalysed reaction is octanedioyl-CoA + H2O = octanedioate + CoA + H(+). It catalyses the reaction decanedioyl-CoA + H2O = decanedioate + CoA + H(+). It carries out the reaction dodecanedioyl-CoA + H2O = dodecanedioate + CoA + H(+). The enzyme catalyses (9Z)-tetradecenoyl-CoA + H2O = (9Z)-tetradecenoate + CoA + H(+). The catalysed reaction is (9Z)-hexadecenoyl-CoA + H2O = (9Z)-hexadecenoate + CoA + H(+). It catalyses the reaction (9Z)-octadecenoyl-CoA + H2O = (9Z)-octadecenoate + CoA + H(+). It carries out the reaction (9Z,12Z)-octadecadienoyl-CoA + H2O = (9Z,12Z)-octadecadienoate + CoA + H(+). The enzyme catalyses eicosanoyl-CoA + H2O = eicosanoate + CoA + H(+). The catalysed reaction is (5Z,8Z,11Z,14Z)-eicosatetraenoyl-CoA + H2O = (5Z,8Z,11Z,14Z)-eicosatetraenoate + CoA + H(+). It catalyses the reaction 4,8-dimethylnonanoyl-CoA + H2O = 4,8-dimethylnonanoate + CoA + H(+). It carries out the reaction 2,6-dimethylheptanoyl-CoA + H2O = 2,6-dimethylheptanoate + CoA + H(+). The enzyme catalyses (3S)-3-hydroxy-3-methylglutaryl-CoA + H2O = 3-hydroxy-3-methylglutarate + CoA + H(+). The catalysed reaction is 3alpha,7alpha,12alpha-trihydroxy-5beta-cholestan-26-oyl-CoA + H2O = 3alpha,7alpha,12alpha-trihydroxy-5beta-cholestan-26-oate + CoA + H(+). It catalyses the reaction 2-methyloctadecanoyl-CoA + H2O = 2-methyloctadecanoate + CoA + H(+). It carries out the reaction prostaglandin F2alpha-CoA + H2O = prostaglandin F2alpha + CoA + H(+). It functions in the pathway lipid metabolism; fatty acid metabolism. Its activity is regulated as follows. Inhibited by CoASH (IC(50)=10-15 uM). Also inhibited by cysteine-reactive agents. Its function is as follows. Catalyzes the hydrolysis of acyl-CoAs into free fatty acids and coenzyme A (CoASH), regulating their respective intracellular levels. Displays no strong substrate specificity with respect to the carboxylic acid moiety of Acyl-CoAs. Hydrolyzes medium length (C2 to C20) straight-chain, saturated and unsaturated acyl-CoAS but is inactive towards substrates with longer aliphatic chains. Moreover, it catalyzes the hydrolysis of CoA esters of bile acids, such as choloyl-CoA and chenodeoxycholoyl-CoA and competes with bile acid CoA:amino acid N-acyltransferase (BAAT). Is also able to hydrolyze CoA esters of dicarboxylic acids. It is involved in the metabolic regulation of peroxisome proliferation. Functionally, (Microbial infection) May mediate Nef-induced down-regulation of CD4 cell-surface expression. This chain is Acyl-coenzyme A thioesterase 8 (ACOT8), found in Homo sapiens (Human).